Consider the following 548-residue polypeptide: Acetylcholine receptor subunit alpha-type des-2 (548 aa).

A signal peptide spans 1–19 (MLIIIQSLLLATTASLCIA). The Extracellular portion of the chain corresponds to 21–239 (TPVPTQIRLV…LTLYLRRKPL (219 aa)). Residues Asn52, Asn96, and Asn224 are each glycosylated (N-linked (GlcNAc...) asparagine). A run of 3 helical transmembrane segments spans residues 240-260 (FYLVNLIIPTSIITLIAIVGF), 274-294 (VSLGITTLLSMSILMLMVSDQ), and 301-321 (FIPLIGWFILAMIIVISLGTV). Residues 422-460 (LIHLSPTAHQPDESISPSAPPVPSSSPLPPPLTPGPADD) are disordered. Over residues 439 to 455 (SAPPVPSSSPLPPPLTP) the composition is skewed to pro residues. A helical transmembrane segment spans residues 517–537 (FVIFVVAFLIITFGINFIGFI). Residues 538-548 (HWHQAGVEYGG) are Cytoplasmic-facing.

Belongs to the ligand-gated ion channel (TC 1.A.9) family. Acetylcholine receptor (TC 1.A.9.1) subfamily. The functional receptor is a heteromer of deg-3 and des-2. Interacts with ric-3; which is required for proper receptor folding.

The protein localises to the cell membrane. Functionally, subunit of the non-synaptic neuronal acetylcholine receptor (AChR), which may play a role in chemotaxis towards choline. After binding choline or acetylcholine, the AChR responds by an extensive change in conformation that affects all subunits and leads to opening of an ion-conducting channel across the plasma membrane. This Caenorhabditis elegans protein is Acetylcholine receptor subunit alpha-type des-2 (des-2).